The sequence spans 967 residues: Probable disease resistance protein At1g61190 (967 aa).

The stretch at 20–68 forms a coiled coil; sequence RCLCGKGYIRNLEKNLRALQREMEDLRATQHEVQNKVAREESRHQQRLE. A disordered region spans residues 132–153; it reads GNFDEVSQPPPRSEVEERPTQP. The 304-residue stretch at 138 to 441 folds into the NB-ARC domain; that stretch reads SQPPPRSEVE…CEGFIGEDQV (304 aa). Residue 180–187 participates in ATP binding; the sequence is GMGGVGKT. 5 LRR repeats span residues 516 to 537, 538 to 559, 562 to 585, 586 to 608, and 609 to 631; these read AVRR…SKCS, ELTT…FIRY, KLVV…SGLV, SLQY…KELK, and KLIF…SRLL.

Belongs to the disease resistance NB-LRR family.

Its function is as follows. Probable disease resistance protein. The sequence is that of Probable disease resistance protein At1g61190 from Arabidopsis thaliana (Mouse-ear cress).